A 188-amino-acid chain; its full sequence is Abscisic acid receptor PYL8 (188 aa).

Positions 25–176 (HELVDNQCSS…NLKSLADISE (152 aa)) are START-like. Cysteine 32 and cysteine 157 are joined by a disulfide. Residue lysine 61 coordinates abscisate. A Phosphothreonine; by CARK1 modification is found at threonine 77. The Gate loop motif lies at 85 to 89 (SGLPA). Abscisate-binding positions include 89-94 (ATRSTE), 116-122 (RLKNYSS), and glutamate 141. A Latch loop motif is present at residues 115–117 (HRL).

It belongs to the PYR/PYL/RCAR abscisic acid intracellular receptor family. As to quaternary structure, monomer. Homodimer. Binds ABA on one subunit only. interacts with ABI1 and HAB1, and possibly with other PP2Cs. Binds to CARs protein in an ABA-independent manner, both at the plasma membrane and in the nucleus. Interacts directly with CAR1 and CAR4. Interacts with MYB44, MYB73 and MYB77 in an ABA-independent manner. Interacts with DDA1. Interacts with CARK1 in the cytosol. Binds to ABI1 when phosphorylated by CARK1. Interacts with AIP1 in the nucleus. Post-translationally, phosphorylated by CARK1 especially in response to abscisic acid (ABA); this phosphorylation promotes its stability and inhibitory ability to ABI1. In terms of processing, ubiquitinated in DDA1- and CDD complex-dependent manner. Ubiquitination leads to its subsequent proteasomal degradation.

The protein localises to the cytoplasm. The protein resides in the cytosol. Its subcellular location is the nucleus. It localises to the cell membrane. Its function is as follows. Receptor for abscisic acid (ABA) required for ABA-mediated responses such as stomatal closure and germination inhibition. Inhibits the activity of group-A protein phosphatases type 2C (PP2Cs) in an ABA-independent manner but more efficiently when activated by ABA. Confers enhanced sensitivity to ABA. Can be activated by both (-)-ABA and (+)-ABA. Mediates crosstalk between ABA and auxin signaling to regulate lateral root growth. Required for lateral root growth suppression by ABA. In response to auxin, promotes lateral root growth by enhancing MYB77-dependent transcription of the auxin-responsive gene IAA19. Enhances the abilities of MYB44 and MYB73 to activate IAA19 gene. The polypeptide is Abscisic acid receptor PYL8 (Arabidopsis thaliana (Mouse-ear cress)).